Reading from the N-terminus, the 244-residue chain is UPF0280 protein MJ1526 (244 aa).

This sequence belongs to the UPF0280 family.

The chain is UPF0280 protein MJ1526 from Methanocaldococcus jannaschii (strain ATCC 43067 / DSM 2661 / JAL-1 / JCM 10045 / NBRC 100440) (Methanococcus jannaschii).